A 53-amino-acid chain; its full sequence is Rubredoxin (53 aa).

The region spanning 1 to 53 (MQKFECTLCGYIYDPALVGPDTPDQDGAFEDVSENWVCPLCGAGKEDFEVYED) is the Rubredoxin-like domain. The Fe cation site is built by Cys-6, Cys-9, Cys-38, and Cys-41.

It belongs to the rubredoxin family. Requires Fe(3+) as cofactor.

In terms of biological role, rubredoxin is a small nonheme, iron protein lacking acid-labile sulfide. Its single Fe, chelated to 4 Cys, functions as an electron acceptor and may also stabilize the conformation of the molecule. The protein is Rubredoxin of Peptoniphilus asaccharolyticus (Peptostreptococcus asaccharolyticus).